A 248-amino-acid chain; its full sequence is ATP synthase subunit a, chloroplastic (248 aa).

5 helical membrane passes run 37–57, 96–116, 135–155, 200–220, and 221–241; these read AQVL…SIVA, VPFI…GALF, INTT…AGLH, LVVA…MMFL, and GLFT…AYIG.

The protein belongs to the ATPase A chain family. As to quaternary structure, F-type ATPases have 2 components, CF(1) - the catalytic core - and CF(0) - the membrane proton channel. CF(1) has five subunits: alpha(3), beta(3), gamma(1), delta(1), epsilon(1). CF(0) has four main subunits: a, b, b' and c.

The protein localises to the plastid. The protein resides in the chloroplast thylakoid membrane. Functionally, key component of the proton channel; it plays a direct role in the translocation of protons across the membrane. The chain is ATP synthase subunit a, chloroplastic from Angiopteris evecta (Mule's foot fern).